The following is a 303-amino-acid chain: Probable 5-dehydro-4-deoxyglucarate dehydratase (303 aa).

Belongs to the DapA family.

The catalysed reaction is 5-dehydro-4-deoxy-D-glucarate + H(+) = 2,5-dioxopentanoate + CO2 + H2O. The protein operates within carbohydrate acid metabolism; D-glucarate degradation; 2,5-dioxopentanoate from D-glucarate: step 2/2. In Pseudomonas savastanoi pv. phaseolicola (strain 1448A / Race 6) (Pseudomonas syringae pv. phaseolicola (strain 1448A / Race 6)), this protein is Probable 5-dehydro-4-deoxyglucarate dehydratase.